The primary structure comprises 189 residues: HTH-type transcriptional regulator Hpr (189 aa).

The 145-residue stretch at 12–156 (ALLYSHKIVQ…ISAIVRRLYG (145 aa)) folds into the HTH marR-type domain. A DNA-binding region (H-T-H motif) is located at residues 62 to 85 (ISEIAKYGVMHVSTAFNFSKKLED).

As to quaternary structure, homodimer.

Its function is as follows. Negative regulator of protease production and sporulation. In Exiguobacterium sibiricum (strain DSM 17290 / CCUG 55495 / CIP 109462 / JCM 13490 / 255-15), this protein is HTH-type transcriptional regulator Hpr.